Consider the following 307-residue polypeptide: Protoheme IX farnesyltransferase (307 aa).

8 helical membrane passes run Met-32–Phe-52, Phe-65–Ile-85, Pro-108–Leu-128, Pro-131–Trp-151, Leu-158–Ile-178, Ile-186–Ala-206, Leu-251–Phe-271, and Phe-287–Phe-307.

The protein belongs to the UbiA prenyltransferase family. Protoheme IX farnesyltransferase subfamily. Interacts with CtaA.

It is found in the cell membrane. It catalyses the reaction heme b + (2E,6E)-farnesyl diphosphate + H2O = Fe(II)-heme o + diphosphate. It participates in porphyrin-containing compound metabolism; heme O biosynthesis; heme O from protoheme: step 1/1. Converts heme B (protoheme IX) to heme O by substitution of the vinyl group on carbon 2 of heme B porphyrin ring with a hydroxyethyl farnesyl side group. The protein is Protoheme IX farnesyltransferase of Bacillus cereus (strain ATCC 10987 / NRS 248).